We begin with the raw amino-acid sequence, 109 residues long: Tyrosine-protein phosphatase 16 (109 aa).

Positions Trp1–Val109 constitute a Tyrosine-protein phosphatase domain. Asp81 is a substrate binding site.

It belongs to the protein-tyrosine phosphatase family.

The enzyme catalyses O-phospho-L-tyrosyl-[protein] + H2O = L-tyrosyl-[protein] + phosphate. In Styela plicata (Wrinkled sea squirt), this protein is Tyrosine-protein phosphatase 16 (STY-16).